Here is a 543-residue protein sequence, read N- to C-terminus: Chaperonin GroEL (543 aa).

Residues 30–33 (TLGP), Lys51, 87–91 (DGTTT), Gly415, 480–482 (DAA), and Asp496 each bind ATP.

The protein belongs to the chaperonin (HSP60) family. As to quaternary structure, forms a cylinder of 14 subunits composed of two heptameric rings stacked back-to-back. Interacts with the co-chaperonin GroES.

The protein localises to the cytoplasm. It carries out the reaction ATP + H2O + a folded polypeptide = ADP + phosphate + an unfolded polypeptide.. Functionally, together with its co-chaperonin GroES, plays an essential role in assisting protein folding. The GroEL-GroES system forms a nano-cage that allows encapsulation of the non-native substrate proteins and provides a physical environment optimized to promote and accelerate protein folding. The protein is Chaperonin GroEL of Hydrogenobaculum sp. (strain Y04AAS1).